The sequence spans 1230 residues: Protein transport protein Sec31A (1230 aa).

7 WD repeats span residues 4–47 (KEID…EIFE), 64–111 (SSSH…AGDK), 120–160 (KHTG…TPMT), 166–206 (QPPE…PIIK), 209–254 (DHSN…SPLR), 258–298 (NHAR…VLYE), and 301–342 (TNTQ…DGLR). An interaction with SEC13 region spans residues 161–470 (PGAKTQPPED…IEASQTEFEK (310 aa)). A WD 8; interaction with SEC13 repeat occupies 397 to 429 (SFSFGGKLVTFESVAVPLQQGAEQQRRQPVFIS). At Arg-423 the chain carries Asymmetric dimethylarginine. Residues Ser-526 and Ser-531 each carry the phosphoserine modification. A Glycyl lysine isopeptide (Lys-Gly) (interchain with G-Cter in ubiquitin) cross-link involves residue Lys-646. 2 disordered regions span residues 789 to 905 (QGKP…ASNA) and 924 to 1104 (MYTA…PIGN). Ser-798 bears the Phosphoserine mark. Residues 799-1123 (SQSPYERQPL…TEKITKKPIP (325 aa)) form an interaction with PDCD6 region. The short motif at 841-847 (GFIMQGN) is the ALG-2-binding site motif-2 (ABS-2) element. The segment covering 866-876 (QLPPYPQPQPY) has biased composition (pro residues). 2 stretches are compositionally biased toward low complexity: residues 930 to 940 (ASSPTSSSAAS) and 959 to 975 (PSSS…GTPP). Polar residues-rich tracts occupy residues 981–995 (PASQ…QDQA) and 1033–1064 (PIMN…SFPQ). Thr-1171 carries the post-translational modification Phosphothreonine. Ser-1173 carries the post-translational modification Phosphoserine. Residue Lys-1227 forms a Glycyl lysine isopeptide (Lys-Gly) (interchain with G-Cter in ubiquitin) linkage.

This sequence belongs to the WD repeat SEC31 family. As to quaternary structure, COPII is composed of at least 5 proteins: the SEC23/24 complex, the SEC13/31 complex and SAR1. SEC13 and SEC31 make a 2:2 tetramer that forms the edge element of the COPII outer coat. The tetramer self-assembles in multiple copies to form the complete polyhedral cage. Interacts (via WD 8) with SEC13. Interacts with PDCD6; interaction takes place in response to cytosolic calcium increase and leads to bridge together the BCR(KLHL12) complex and SEC31A, leading to monoubiquitination. Interacts with KLHL12. Monoubiquitinated by the BCR(KLHL12) E3 ubiquitin ligase complex, leading to regulate the size of COPII coats.

The protein resides in the cytoplasm. It is found in the cytoplasmic vesicle. Its subcellular location is the COPII-coated vesicle membrane. It localises to the endoplasmic reticulum membrane. Component of the coat protein complex II (COPII) which promotes the formation of transport vesicles from the endoplasmic reticulum (ER). The coat has two main functions, the physical deformation of the endoplasmic reticulum membrane into vesicles and the selection of cargo molecules. In Mus musculus (Mouse), this protein is Protein transport protein Sec31A (Sec31a).